A 258-amino-acid chain; its full sequence is NAD-dependent protein deacylase (258 aa).

The Deacetylase sirtuin-type domain occupies 3-258 (ERQLEKSIEH…LPALMRGLSA (256 aa)). 28-48 (GAGMSADSGLETYRDDKTGLW) lines the NAD(+) pocket. Residues tyrosine 73 and arginine 76 each coordinate substrate. Residue 109 to 112 (QNID) participates in NAD(+) binding. The Proton acceptor role is filled by histidine 127. 4 residues coordinate Zn(2+): cysteine 135, cysteine 138, cysteine 161, and cysteine 164. NAD(+)-binding positions include 201–203 (GTS) and alanine 245.

It belongs to the sirtuin family. Class III subfamily. The cofactor is Zn(2+).

The protein resides in the cytoplasm. It catalyses the reaction N(6)-acetyl-L-lysyl-[protein] + NAD(+) + H2O = 2''-O-acetyl-ADP-D-ribose + nicotinamide + L-lysyl-[protein]. The catalysed reaction is N(6)-succinyl-L-lysyl-[protein] + NAD(+) + H2O = 2''-O-succinyl-ADP-D-ribose + nicotinamide + L-lysyl-[protein]. In terms of biological role, NAD-dependent lysine deacetylase and desuccinylase that specifically removes acetyl and succinyl groups on target proteins. Modulates the activities of several proteins which are inactive in their acylated form. The protein is NAD-dependent protein deacylase of Corynebacterium glutamicum (strain ATCC 13032 / DSM 20300 / JCM 1318 / BCRC 11384 / CCUG 27702 / LMG 3730 / NBRC 12168 / NCIMB 10025 / NRRL B-2784 / 534).